A 277-amino-acid chain; its full sequence is Zinc transporter ZupT (277 aa).

Transmembrane regions (helical) follow at residues 7-27 (VLLA…GSAI), 38-58 (FLAV…FVEI), 73-93 (VLAS…IAVI), 133-155 (AGVL…AFSA), 165-187 (AIAV…PIYY), 196-216 (FLYS…GYVV), 220-240 (FFTP…MVYI), and 257-277 (LCIL…LLFL). Fe(2+) is bound by residues Asn-145 and Glu-148. Positions 148 and 173 each coordinate Zn(2+). Residues Asn-174, Glu-177, and Glu-206 each coordinate Fe(2+). Zn(2+) is bound at residue Glu-177.

This sequence belongs to the ZIP transporter (TC 2.A.5) family. ZupT subfamily.

Its subcellular location is the cell inner membrane. The catalysed reaction is Zn(2+)(in) = Zn(2+)(out). Its function is as follows. Mediates zinc uptake. May also transport other divalent cations. This Nitratidesulfovibrio vulgaris (strain ATCC 29579 / DSM 644 / CCUG 34227 / NCIMB 8303 / VKM B-1760 / Hildenborough) (Desulfovibrio vulgaris) protein is Zinc transporter ZupT.